The chain runs to 173 residues: ATP synthase subunit b (173 aa).

Residues 18–38 (IFWSLVILIIVAVFFYKFFLP) traverse the membrane as a helical segment.

The protein belongs to the ATPase B chain family. In terms of assembly, F-type ATPases have 2 components, F(1) - the catalytic core - and F(0) - the membrane proton channel. F(1) has five subunits: alpha(3), beta(3), gamma(1), delta(1), epsilon(1). F(0) has three main subunits: a(1), b(2) and c(10-14). The alpha and beta chains form an alternating ring which encloses part of the gamma chain. F(1) is attached to F(0) by a central stalk formed by the gamma and epsilon chains, while a peripheral stalk is formed by the delta and b chains.

The protein resides in the cell membrane. F(1)F(0) ATP synthase produces ATP from ADP in the presence of a proton or sodium gradient. F-type ATPases consist of two structural domains, F(1) containing the extramembraneous catalytic core and F(0) containing the membrane proton channel, linked together by a central stalk and a peripheral stalk. During catalysis, ATP synthesis in the catalytic domain of F(1) is coupled via a rotary mechanism of the central stalk subunits to proton translocation. Its function is as follows. Component of the F(0) channel, it forms part of the peripheral stalk, linking F(1) to F(0). This Bifidobacterium adolescentis (strain ATCC 15703 / DSM 20083 / NCTC 11814 / E194a) protein is ATP synthase subunit b.